Reading from the N-terminus, the 977-residue chain is Aspartate, glycine, lysine and serine-rich protein (977 aa).

Positions 23–116 (GVLPDVDSGF…PITNLGSSTS (94 aa)) are disordered. Basic and acidic residues predominate over residues 37-50 (EETKSEPKQPDTKP). The span at 51–63 (EQPSVSKPDSSVN) shows a compositional bias: polar residues. Residue N136 is glycosylated (N-linked (GlcNAc...) asparagine). Disordered stretches follow at residues 246–767 (AGGG…TSRG) and 780–922 (GGGK…GSGL). Low complexity predominate over residues 251–278 (YYSDSSDSSDSDSSGSDSSESGSSESGS). Residues 309–325 (NGSPDNGTPGSGSSRYT) show a composition bias toward polar residues. Residues 410-427 (LEDELLGSDSSDEDDIDD) show a composition bias toward acidic residues. Residues 428 to 443 (GLGGLGLGAGPGGPGG) show a composition bias toward gly residues. Basic residues-rich tracts occupy residues 447-457 (TPKHKPRTDKK) and 465-540 (KRKP…VQRK). A compositionally biased stretch (basic and acidic residues) spans 541–557 (QPREYKQESPEVEREHS). Positions 572-583 (KILITSLTSSRG) are enriched in low complexity. Positions 591–643 (DGSGSGNGGGDDGNGGGAGNGGGAGNGGGAGNGGGAGNGGGNGGGGNGGGGND) are enriched in gly residues. The segment covering 660–675 (EHRNRCEDDDDYREKC) has biased composition (basic and acidic residues). Low complexity predominate over residues 700–724 (SGSSSSSSATESESSSTSTTPSTSS). Composition is skewed to polar residues over residues 730–744 (ILSTLSGRSQKTRSG), 758–767 (SRPSVATSRG), and 785–801 (STGTTVTSKPSTGTSSA). Composition is skewed to low complexity over residues 803–814 (GLDLSGLLGQLG), 822–857 (GPKPDSKPSTGSPSTTSKPSTGSSSGPGLDLSGLLG), and 870–907 (KKPTASSKPTAPSTPSKSTGSSPGKGLDLSGLLGKLSP).

Component of the acid-insoluble and acid-soluble organic matrix of calcified layers of the shell (at protein level).

Its subcellular location is the secreted. This Lottia gigantea (Giant owl limpet) protein is Aspartate, glycine, lysine and serine-rich protein.